Consider the following 78-residue polypeptide: Acyl carrier protein BQ2027_MB0103 (78 aa).

Residues 1–78 (MRDRILAAVC…ELEAVCTEFG (78 aa)) enclose the Carrier domain. O-(pantetheine 4'-phosphoryl)serine is present on serine 35.

This sequence belongs to the acyl carrier protein (ACP) family. Requires pantetheine 4'-phosphate as cofactor.

It participates in lipid metabolism; fatty acid metabolism. Functionally, acyl-carrier protein (ACP) involved in the biosynthesis of a unique class of isonitrile lipopeptides (INLPs) that seem to play a role in metal acquisition. Is the dedicated ACP for the loading of activated acyl groups catalyzed by FadD10. This is Acyl carrier protein BQ2027_MB0103 from Mycobacterium bovis (strain ATCC BAA-935 / AF2122/97).